A 56-amino-acid polypeptide reads, in one-letter code: UPF0291 protein Clos_1191 (56 aa).

It belongs to the UPF0291 family.

The protein resides in the cytoplasm. The polypeptide is UPF0291 protein Clos_1191 (Alkaliphilus oremlandii (strain OhILAs) (Clostridium oremlandii (strain OhILAs))).